The sequence spans 205 residues: Guanylate kinase (205 aa).

In terms of domain architecture, Guanylate kinase-like spans 19–197; sequence PKLFTISAPA…AYRVLKSIFI (179 aa). 26 to 33 serves as a coordination point for ATP; the sequence is APAGVGKT.

It belongs to the guanylate kinase family.

The protein localises to the cytoplasm. The catalysed reaction is GMP + ATP = GDP + ADP. In terms of biological role, essential for recycling GMP and indirectly, cGMP. This Chlamydia pneumoniae (Chlamydophila pneumoniae) protein is Guanylate kinase (gmk).